Reading from the N-terminus, the 209-residue chain is MRHQCIQIPFKVNLLNKYFISGNHLSQLGELSGYYCVKDIHQRMLQHPIGQRILNDKPRVTPQTFKIEELLKLDENTFGHQYGKFMKDRDFSSGERPIVKYIPDLELAYVYQRYKEIHDFIHVLLMYDVSVYDEIVVKWFEMAQLGLPSATLSAFVGSFKLNCQEKQKLMETLPQILKRAHKSEFIMNVYFEEHINTDITQLRKSLRLL.

Residues His-118, Asp-119, His-122, and Glu-134 each coordinate Zn(2+).

This sequence belongs to the COQ4 family. As to quaternary structure, component of a multi-subunit COQ enzyme complex. It depends on Zn(2+) as a cofactor.

It is found in the mitochondrion inner membrane. The catalysed reaction is a 4-hydroxy-3-methoxy-5-(all-trans-polyprenyl)benzoate + H(+) = a 2-methoxy-6-(all-trans-polyprenyl)phenol + CO2. Its pathway is cofactor biosynthesis; ubiquinone biosynthesis. Functionally, lyase that catalyzes the C1-decarboxylation of 4-hydroxy-3-methoxy-5-(all-trans-polyprenyl)benzoic acid into 2-methoxy-6-(all-trans-polyprenyl)phenol during ubiquinone biosynthesis. This is Ubiquinone biosynthesis protein COQ4 homolog 2, mitochondrial from Paramecium tetraurelia.